The primary structure comprises 468 residues: Adenylosuccinate synthetase (468 aa).

GTP contacts are provided by residues 23–29 (GDEGKGK) and 51–53 (GHE). Asp-24 acts as the Proton acceptor in catalysis. Mg(2+) contacts are provided by Asp-24 and Gly-51. Residues 24 to 27 (DEGK), 49 to 52 (NSGH), Thr-142, Arg-156, Asn-238, Thr-253, and Arg-317 each bind IMP. Residue His-52 is the Proton donor of the active site. 313-319 (VTTGRTR) contacts substrate. Residues Arg-319 and 345-347 (KLD) each bind GTP.

This sequence belongs to the adenylosuccinate synthetase family. Homodimer. Requires Mg(2+) as cofactor.

The protein resides in the cytoplasm. The catalysed reaction is IMP + L-aspartate + GTP = N(6)-(1,2-dicarboxyethyl)-AMP + GDP + phosphate + 2 H(+). The protein operates within purine metabolism; AMP biosynthesis via de novo pathway; AMP from IMP: step 1/2. Plays an important role in the salvage pathway for purine nucleotide biosynthesis. Catalyzes the first committed step in the biosynthesis of AMP from IMP. In Theileria annulata, this protein is Adenylosuccinate synthetase.